We begin with the raw amino-acid sequence, 191 residues long: 3-isopropylmalate dehydratase small subunit (191 aa).

The protein belongs to the LeuD family. LeuD type 1 subfamily. As to quaternary structure, heterodimer of LeuC and LeuD.

The catalysed reaction is (2R,3S)-3-isopropylmalate = (2S)-2-isopropylmalate. It participates in amino-acid biosynthesis; L-leucine biosynthesis; L-leucine from 3-methyl-2-oxobutanoate: step 2/4. In terms of biological role, catalyzes the isomerization between 2-isopropylmalate and 3-isopropylmalate, via the formation of 2-isopropylmaleate. The chain is 3-isopropylmalate dehydratase small subunit from Anaeromyxobacter dehalogenans (strain 2CP-1 / ATCC BAA-258).